Consider the following 113-residue polypeptide: Protein crumbs homolog 3 (113 aa).

The first 24 residues, 1-24, serve as a signal peptide directing secretion; sequence MATPGLGVLLAFGLPMLPSGWSLT. Residues 23 to 44 form a disordered region; that stretch reads LTAPDPFTNSTTQPPGDESNGG. Topologically, residues 25–49 are extracellular; the sequence is APDPFTNSTTQPPGDESNGGLSSGA. Asparagine 31 carries an N-linked (GlcNAc...) asparagine glycan. Residues 50–70 traverse the membrane as a helical segment; sequence IVAITVVFSILGVLLIAVGLF. Over 71–113 the chain is Cytoplasmic; sequence LLMRKLREKRQTEGTYRPSSEEQVGARAPPPPNLKLPPEERLI. Residues 77–113 are interaction with EPB41L5; the sequence is REKRQTEGTYRPSSEEQVGARAPPPPNLKLPPEERLI. The disordered stretch occupies residues 80 to 113; the sequence is RQTEGTYRPSSEEQVGARAPPPPNLKLPPEERLI. Polar residues predominate over residues 83–92; the sequence is EGTYRPSSEE. The PDZ-binding motif lies at 110 to 113; sequence ERLI.

Component of a complex composed of CRB3, PALS1 and PATJ. Interacts (via C-terminus) with PALS1 (via PDZ domain). Interacts with PARD6A. Interacts (via intracellular domain) with EPB41L5. Interacts with WDR83. In terms of tissue distribution, expressed in the apical renal tubules (at protein level). Expressed in the retinal pigment epithelium.

Its subcellular location is the apical cell membrane. The protein localises to the cell junction. It localises to the tight junction. Its function is as follows. Involved in the establishment of cell polarity in mammalian epithelial cells. Regulates the morphogenesis of tight junctions. Involved in promoting phosphorylation and cytoplasmic retention of transcriptional coactivators YAP1 and WWTR1/TAZ which leads to suppression of TGFB1-dependent transcription of target genes such as CCN2/CTGF, SERPINE1/PAI1, SNAI1/SNAIL1 and SMAD7. In Mus musculus (Mouse), this protein is Protein crumbs homolog 3 (Crb3).